Here is a 329-residue protein sequence, read N- to C-terminus: Ferredoxin--NAD(P)(+) reductase CarAd (329 aa).

The 91-residue stretch at 2-92 (YQLKIEGQAP…DLRIKVAVQD (91 aa)) folds into the 2Fe-2S ferredoxin-type domain. Positions 35, 40, 43, and 76 each coordinate [2Fe-2S] cluster. The 101-residue stretch at 100-200 (ISRMEAEVVE…TGPMGTSFFR (101 aa)) folds into the FAD-binding FR-type domain.

As to quaternary structure, monomer. Carbazole 1,9a-dioxygenase complex consists of a terminal oxygenase component CarAa, a ferredoxin reductase component CarAd and a ferredoxin component CarAc. Requires [2Fe-2S] cluster as cofactor. FAD serves as cofactor.

It carries out the reaction 2 reduced [2Fe-2S]-[ferredoxin] + NAD(+) + H(+) = 2 oxidized [2Fe-2S]-[ferredoxin] + NADH. The enzyme catalyses 2 reduced [2Fe-2S]-[ferredoxin] + NADP(+) + H(+) = 2 oxidized [2Fe-2S]-[ferredoxin] + NADPH. Functionally, part of the multicomponent carbazole 1,9a-dioxygenase (CARDO), that converts carbazole (CAR) into 2-aminobiphenyl-2,3-diol. It can use both NAD and NADP as electron donors, but NAD is supposed to be the physiological electron donor. This is Ferredoxin--NAD(P)(+) reductase CarAd (carAd) from Metapseudomonas resinovorans (Pseudomonas resinovorans).